Consider the following 632-residue polypeptide: RNA-binding post-transcriptional regulator csx1 (632 aa).

Residues Ser-42 and Ser-54 each carry the phosphoserine; by MAPK sty1 modification. Phosphoserine occurs at positions 67 and 69. 2 RRM domains span residues 85 to 167 (DTLW…WATG) and 182 to 261 (FSIF…VASP). Ser-291 carries the phosphoserine; by MAPK sty1 modification. Positions 297 to 369 (TTVFVGGLAS…SHIRLAWGHN (73 aa)) constitute an RRM 3 domain. Ser-455 carries the phosphoserine; by MAPK sty1 modification. The segment at 456-476 (PPPLSRSASISPTLSGSGSGL) is disordered. Low complexity predominate over residues 466 to 476 (SPTLSGSGSGL).

Interacts with cip1 and cip2.

The protein localises to the cytoplasm. Functionally, regulates global gene expression after oxidative stress. Interacts and stabilizes atf1 and pcr1 mRNAs after oxidative stress, thus controlling their turnover. In Schizosaccharomyces pombe (strain 972 / ATCC 24843) (Fission yeast), this protein is RNA-binding post-transcriptional regulator csx1 (csx1).